The primary structure comprises 293 residues: Formamidopyrimidine-DNA glycosylase (293 aa).

Pro-2 acts as the Schiff-base intermediate with DNA in catalysis. Residue Glu-3 is the Proton donor of the active site. The Proton donor; for beta-elimination activity role is filled by Lys-58. The DNA site is built by His-104, Arg-123, and Lys-166. The FPG-type zinc-finger motif lies at 257-293; that stretch reads AVYDRESEPCRTKGCGGVVKRFVQNGRSTFCCPKCQK. Catalysis depends on Arg-283, which acts as the Proton donor; for delta-elimination activity.

This sequence belongs to the FPG family. Monomer. Zn(2+) serves as cofactor.

The enzyme catalyses Hydrolysis of DNA containing ring-opened 7-methylguanine residues, releasing 2,6-diamino-4-hydroxy-5-(N-methyl)formamidopyrimidine.. It catalyses the reaction 2'-deoxyribonucleotide-(2'-deoxyribose 5'-phosphate)-2'-deoxyribonucleotide-DNA = a 3'-end 2'-deoxyribonucleotide-(2,3-dehydro-2,3-deoxyribose 5'-phosphate)-DNA + a 5'-end 5'-phospho-2'-deoxyribonucleoside-DNA + H(+). In terms of biological role, involved in base excision repair of DNA damaged by oxidation or by mutagenic agents. Acts as a DNA glycosylase that recognizes and removes damaged bases. Has a preference for oxidized purines, such as 7,8-dihydro-8-oxoguanine (8-oxoG). Has AP (apurinic/apyrimidinic) lyase activity and introduces nicks in the DNA strand. Cleaves the DNA backbone by beta-delta elimination to generate a single-strand break at the site of the removed base with both 3'- and 5'-phosphates. This is Formamidopyrimidine-DNA glycosylase from Rhodopseudomonas palustris (strain BisA53).